Reading from the N-terminus, the 69-residue chain is Purkinje cell protein 4-like protein 1 (69 aa).

Over residues 1 to 15 (MSELNTKTSPATNQA) the composition is skewed to polar residues. The interval 1 to 47 (MSELNTKTSPATNQAPGPEEKGKAGSAKKTEDEEEEIDIDLTAPETE) is disordered. At Thr-8 the chain carries Phosphothreonine. Residues 18-31 (PEEKGKAGSAKKTE) are compositionally biased toward basic and acidic residues. Positions 46–69 (TEKAALAIQGKFRRFQKRKKDPSS) constitute an IQ domain.

It belongs to the PCP4 family.

The protein is Purkinje cell protein 4-like protein 1 (PCP4L1) of Bos taurus (Bovine).